Here is a 233-residue protein sequence, read N- to C-terminus: MLSRVSVFKPASRGFSVLSSLKITEHTSAKHTEKPEHAPKCQNLSDAQAAFLDRVIRVDQAGELGADYIYAGQYFVLAHRYPHLKPVLKHIWDQEIHHHNTFNNLQLKRRVRPSLLTPLWKAGAFAMGAGTALISPEAAMACTEAVETVIGGHYNGQLRNLANQFNLERTDGTKGPSEEIKSLTSTIQQFRDDELEHLDTAIKHDSYMAVPYTVITEGIKTICRVAIWSAERI.

A mitochondrion-targeting transit peptide spans 1 to 15 (MLSRVSVFKPASRGF). Phosphoserine is present on residues Ser-20 and Ser-28. Thr-32 bears the Phosphothreonine mark. Glu-63, Glu-95, His-98, Glu-147, Glu-194, and His-197 together coordinate Fe cation.

This sequence belongs to the COQ7 family. Component of a multi-subunit COQ enzyme complex, composed of at least COQ3, COQ4, COQ5, COQ6, COQ7 and COQ9. The cofactor is Fe cation. Phosphorylated. Dephosphorylated by PTC7; dephosphorylation is essential for enzyme activation.

It localises to the mitochondrion inner membrane. It carries out the reaction a 5-methoxy-2-methyl-3-(all-trans-polyprenyl)benzene-1,4-diol + AH2 + O2 = a 3-demethylubiquinol + A + H2O. It catalyses the reaction a 5-methoxy-2-methyl-3-(all-trans-polyprenyl)benzoquinone + NADH + O2 = a 3-demethylubiquinone + NAD(+) + H2O. It participates in cofactor biosynthesis; ubiquinone biosynthesis. With respect to regulation, dephosphorylation by PTC7 leads to activation. Its function is as follows. Catalyzes the hydroxylation of 2-hexaprenyl-3-methyl-6-methoxy-1,4-benzoquinol (DMQH2) during ubiquinone biosynthesis. Also catalyzes the hydroxylation of the 5-methoxy-2-methyl-3-(all-trans-polyprenyl)benzoquinone at the C6 position and participates in the biosynthesis of ubiquinone. Also has a structural role in the COQ enzyme complex, stabilizing COQ3 and COQ4 polypeptides. The protein is 5-demethoxyubiquinone hydroxylase, mitochondrial of Saccharomyces cerevisiae (strain ATCC 204508 / S288c) (Baker's yeast).